Consider the following 565-residue polypeptide: MIVLLLLISYCFAGNGVNVKNQLLLMPYPTTVNAQFGSNDCVEATSNIKMVLSNNCQNDPNCLSFMTFNFNHTITYPLQRQRNLEDFRVSIFAPIDIEEMKGNVVYSANTVNIELTGNNIEEIYPPLKIGIDESYSLDVTKEGIKISATTVYGARLGLETLIQMLRPYQGKYIIKHIPIMIEDKPRLQWRGLMIDVARNSFSRSAFVKIINAMAAIKANVLHIHLSDAQTFMFESKEYPELSKKGAFFQNKVLTQSFIKQLVQYGAKRGVIVYPEIDTPAHTASWNAGYPGVVADIWDYIVSSSMRYGENVLALNPANEKTFSIIDALMKEMGEVFGNDYVHFGGDEVWTGAWSKAKEYPAILEWMNKKGINTLKELEAYFNKYAQEQIIKNGKTPVCWEEVYQKGSADKKTIIQVWNNVNLLKEAATAGYKVILSAGYYLDMQMPLCSDYVADSCTNPNHMWVWTNRDMYRNDPIKELDYATKQNVLGGEACSWDESVDEQNFFDRVFQRFSAVAERFWSSEDITDPESHEVRANYVRCLGLRRNFLKGTGPLYHSYCQLPEDI.

Residues Met-1–Ala-13 form the signal peptide. Asn-71 carries N-linked (GlcNAc...) asparagine glycosylation. Glu-347 functions as the Proton donor in the catalytic mechanism.

The protein belongs to the glycosyl hydrolase 20 family. In terms of assembly, heterodimer of one alpha subunit and one beta subunit. Post-translationally, glycosylated.

Its subcellular location is the cytoplasmic granule. The protein localises to the secreted. The enzyme catalyses Hydrolysis of terminal non-reducing N-acetyl-D-hexosamine residues in N-acetyl-beta-D-hexosaminides.. Hydrolyzes the non-reducing end N-acetyl-D-hexosamine and/or sulfated N-acetyl-D-hexosamine of glycoconjugates. May contribute to amoebic pathogenicity and may be involved in the destruction of extracellular matrix components. This Entamoeba histolytica (strain ATCC 30459 / HM-1:IMSS / ABRM) protein is Beta-hexosaminidase subunit beta.